We begin with the raw amino-acid sequence, 114 residues long: Large ribosomal subunit protein bL20c (114 aa).

The protein belongs to the bacterial ribosomal protein bL20 family.

It localises to the plastid. The protein localises to the cyanelle. Its function is as follows. Binds directly to 23S ribosomal RNA and is necessary for the in vitro assembly process of the 50S ribosomal subunit. It is not involved in the protein synthesizing functions of that subunit. This Cyanophora paradoxa protein is Large ribosomal subunit protein bL20c (rpl20).